The following is a 189-amino-acid chain: Large ribosomal subunit protein eL19A (189 aa).

Lysine 21 is covalently cross-linked (Glycyl lysine isopeptide (Lys-Gly) (interchain with G-Cter in ubiquitin)). 2 positions are modified to phosphoserine: serine 30 and serine 37. Residues lysine 53 and lysine 60 each participate in a glycyl lysine isopeptide (Lys-Gly) (interchain with G-Cter in ubiquitin) cross-link. The disordered stretch occupies residues 58–85 (HSKSRTRAHAQSKREGRHSGYGKRKGTR). A compositionally biased stretch (basic residues) spans 59–68 (SKSRTRAHAQ). Phosphoserine is present on serine 91. Glycyl lysine isopeptide (Lys-Gly) (interchain with G-Cter in ubiquitin) cross-links involve residues lysine 146 and lysine 186. The tract at residues 164-189 (LKNRAARDRRAQRVAEKRDALLKEDA) is disordered.

Belongs to the eukaryotic ribosomal protein eL19 family. Component of the large ribosomal subunit (LSU). Mature yeast ribosomes consist of a small (40S) and a large (60S) subunit. The 40S small subunit contains 1 molecule of ribosomal RNA (18S rRNA) and 33 different proteins (encoded by 57 genes). The large 60S subunit contains 3 rRNA molecules (25S, 5.8S and 5S rRNA) and 46 different proteins (encoded by 81 genes). eL19 lies in close proximity to the binding site for eukaryotic initiation factor eIF4G.

Its subcellular location is the cytoplasm. Its function is as follows. Component of the ribosome, a large ribonucleoprotein complex responsible for the synthesis of proteins in the cell. The small ribosomal subunit (SSU) binds messenger RNAs (mRNAs) and translates the encoded message by selecting cognate aminoacyl-transfer RNA (tRNA) molecules. The large subunit (LSU) contains the ribosomal catalytic site termed the peptidyl transferase center (PTC), which catalyzes the formation of peptide bonds, thereby polymerizing the amino acids delivered by tRNAs into a polypeptide chain. The nascent polypeptides leave the ribosome through a tunnel in the LSU and interact with protein factors that function in enzymatic processing, targeting, and the membrane insertion of nascent chains at the exit of the ribosomal tunnel. eL19 may play a role in the last stages of translation initiation, in particular subunit joining and shedding/releasing factors. This Saccharomyces cerevisiae (strain ATCC 204508 / S288c) (Baker's yeast) protein is Large ribosomal subunit protein eL19A.